A 1066-amino-acid chain; its full sequence is FHIP family protein GH13096 (1066 aa).

Residues 1 to 15 (MSWLRTSPLRQSLTR) show a composition bias toward polar residues. A disordered region spans residues 1-33 (MSWLRTSPLRQSLTRNSGGNGSGGSGNSGNASA). Over residues 18-27 (GGNGSGGSGN) the composition is skewed to gly residues. Ser512 bears the Phosphoserine mark. 3 disordered regions span residues 647 to 688 (SFKW…NSSG), 827 to 885 (DNSP…RSDN), and 942 to 1010 (SRGV…FNSE). Over residues 658 to 687 (NDATTTTATSDPDVEHNNSSNHNNSSINSS) the composition is skewed to low complexity. The residue at position 829 (Ser829) is a Phosphoserine. Residues 836–856 (HQQQQLQHTTNSTHQQQQAQQ) show a composition bias toward low complexity. Residues 950–963 (PRGNTCETSLSTTP) show a composition bias toward polar residues. A compositionally biased stretch (low complexity) spans 967 to 996 (AQATSASSTNSSIGGSTQTLSATHSSSTLH). Positions 1001-1010 (GPQTASFNSE) are enriched in polar residues.

The protein belongs to the FHIP family.

This Drosophila grimshawi (Hawaiian fruit fly) protein is FHIP family protein GH13096.